A 273-amino-acid chain; its full sequence is Putative phosphoenolpyruvate synthase regulatory protein (273 aa).

An ADP-binding site is contributed by 153-160 (AVSRAGKT).

Belongs to the pyruvate, phosphate/water dikinase regulatory protein family. PSRP subfamily.

It carries out the reaction [pyruvate, water dikinase] + ADP = [pyruvate, water dikinase]-phosphate + AMP + H(+). The catalysed reaction is [pyruvate, water dikinase]-phosphate + phosphate + H(+) = [pyruvate, water dikinase] + diphosphate. In terms of biological role, bifunctional serine/threonine kinase and phosphorylase involved in the regulation of the phosphoenolpyruvate synthase (PEPS) by catalyzing its phosphorylation/dephosphorylation. The polypeptide is Putative phosphoenolpyruvate synthase regulatory protein (Xylella fastidiosa (strain M12)).